The chain runs to 193 residues: MAEIRRKLVIVGDGACGKTCLLIVFSKGTFPEVYVPTVFENYVADVEVDGKHVELALWDTAGQEDYDRLRPLSYPDSHVILICFAVDSPDSLDNVQEKWISEVLHFCQGLPIILVGCKKDLRHDPKTIEELNKTSQKPVTPEQGEEVRKKIGAYKYLECSARTNEGVREVFEAATRAALLTKTHKSKKKCSIL.

Position 12–19 (12–19) interacts with GTP; the sequence is GDGACGKT. Residues 34–42 carry the Effector region motif; sequence YVPTVFENY. GTP contacts are provided by residues 59-63 and 117-120; these read DTAGQ and CKKD. Cysteine methyl ester is present on C190. C190 carries the S-geranylgeranyl cysteine lipid modification. Residues 191 to 193 constitute a propeptide, removed in mature form; the sequence is SIL.

The protein belongs to the small GTPase superfamily. Rho family.

Its subcellular location is the cell membrane. In terms of biological role, has a role in cell polarity, primary and secondary germ tube emergence and cell wall deposition. In Emericella nidulans (strain FGSC A4 / ATCC 38163 / CBS 112.46 / NRRL 194 / M139) (Aspergillus nidulans), this protein is GTP-binding protein rhoA (rhoA).